The primary structure comprises 315 residues: Glutamyl-Q tRNA(Asp) synthetase (315 aa).

L-glutamate contacts are provided by residues 21–25 (RFAPS) and glutamate 63. The short motif at 24–34 (PSPSGLLHFGS) is the 'HIGH' region element. Positions 119, 121, 133, and 137 each coordinate Zn(2+). Residues tyrosine 190 and arginine 208 each coordinate L-glutamate. A 'KMSKS' region motif is present at residues 251–255 (KLSKQ). Residue lysine 254 coordinates ATP.

Belongs to the class-I aminoacyl-tRNA synthetase family. GluQ subfamily. The cofactor is Zn(2+).

Functionally, catalyzes the tRNA-independent activation of glutamate in presence of ATP and the subsequent transfer of glutamate onto a tRNA(Asp). Glutamate is transferred on the 2-amino-5-(4,5-dihydroxy-2-cyclopenten-1-yl) moiety of the queuosine in the wobble position of the QUC anticodon. The protein is Glutamyl-Q tRNA(Asp) synthetase of Colwellia psychrerythraea (strain 34H / ATCC BAA-681) (Vibrio psychroerythus).